A 102-amino-acid polypeptide reads, in one-letter code: Large ribosomal subunit protein bL21 (102 aa).

It belongs to the bacterial ribosomal protein bL21 family. As to quaternary structure, part of the 50S ribosomal subunit. Contacts protein L20.

Functionally, this protein binds to 23S rRNA in the presence of protein L20. This is Large ribosomal subunit protein bL21 from Campylobacter lari (strain RM2100 / D67 / ATCC BAA-1060).